A 143-amino-acid chain; its full sequence is Putative pre-16S rRNA nuclease (143 aa).

It belongs to the YqgF nuclease family.

Its subcellular location is the cytoplasm. Could be a nuclease involved in processing of the 5'-end of pre-16S rRNA. The chain is Putative pre-16S rRNA nuclease from Salinibacter ruber (strain DSM 13855 / M31).